Consider the following 202-residue polypeptide: Imidazoleglycerol-phosphate dehydratase (202 aa).

The protein belongs to the imidazoleglycerol-phosphate dehydratase family.

It localises to the cytoplasm. The enzyme catalyses D-erythro-1-(imidazol-4-yl)glycerol 3-phosphate = 3-(imidazol-4-yl)-2-oxopropyl phosphate + H2O. It functions in the pathway amino-acid biosynthesis; L-histidine biosynthesis; L-histidine from 5-phospho-alpha-D-ribose 1-diphosphate: step 6/9. This chain is Imidazoleglycerol-phosphate dehydratase, found in Brucella suis (strain ATCC 23445 / NCTC 10510).